Reading from the N-terminus, the 699-residue chain is Protein STRUBBELIG-RECEPTOR FAMILY 5 (699 aa).

An N-terminal signal peptide occupies residues 1 to 22 (MTQKLVRLVIVSLAITVTLLQA). At 23 to 273 (KTDNQEVSAL…DGGGITAGTG (251 aa)) the chain is on the extracellular side. LRR repeat units lie at residues 93 to 115 (SLTT…LPPN), 116 to 136 (IANL…SLSQ), 139 to 161 (NLQS…FQKL), 163 to 186 (KLET…ANLT), and 187 to 209 (SLKK…RNLA). Asn184 carries an N-linked (GlcNAc...) asparagine glycan. Positions 239-263 (NDWSTETAPPPPPGVKYGRKSSGSK) are disordered. Residues 274–294 (MVIAGACLGVLVLIIVLIALV) form a helical membrane-spanning segment. The Cytoplasmic segment spans residues 295 to 699 (SKKKSSLSPH…SYRAHDDYDY (405 aa)). At Ser368 the chain carries Phosphoserine. One can recognise a Protein kinase domain in the interval 404–675 (FSPGNLLGEG…SEVVEALVRM (272 aa)). ATP is bound by residues 410-418 (LGEGSIGRV) and Lys432.

This sequence belongs to the protein kinase superfamily. Ser/Thr protein kinase family. In terms of tissue distribution, expressed in leaves and flowers.

The protein resides in the membrane. The protein is Protein STRUBBELIG-RECEPTOR FAMILY 5 (SRF5) of Arabidopsis thaliana (Mouse-ear cress).